A 291-amino-acid chain; its full sequence is Diaminopimelate epimerase (291 aa).

Positions 11 and 78 each coordinate substrate. The active-site Proton donor is Cys87. Substrate is bound by residues 88–89 (GN), Asn166, Asn200, and 218–219 (ER). The active-site Proton acceptor is the Cys227. 228–229 (GT) lines the substrate pocket.

It belongs to the diaminopimelate epimerase family. In terms of assembly, homodimer.

It localises to the cytoplasm. The catalysed reaction is (2S,6S)-2,6-diaminopimelate = meso-2,6-diaminopimelate. Its pathway is amino-acid biosynthesis; L-lysine biosynthesis via DAP pathway; DL-2,6-diaminopimelate from LL-2,6-diaminopimelate: step 1/1. Functionally, catalyzes the stereoinversion of LL-2,6-diaminopimelate (L,L-DAP) to meso-diaminopimelate (meso-DAP), a precursor of L-lysine and an essential component of the bacterial peptidoglycan. The polypeptide is Diaminopimelate epimerase (Mycolicibacterium smegmatis (strain ATCC 700084 / mc(2)155) (Mycobacterium smegmatis)).